Here is a 147-residue protein sequence, read N- to C-terminus: Insertion element IS402 uncharacterized 16.2 kDa protein (147 aa).

A disordered region spans residues 106–147 (DSSSIRAVGAGQKLGQTPPIARDPVPSTTSSPTPTVRRSPRS). Positions 129 to 147 (PVPSTTSSPTPTVRRSPRS) are enriched in low complexity.

This sequence belongs to the transposase 6 family.

In Burkholderia cepacia (Pseudomonas cepacia), this protein is Insertion element IS402 uncharacterized 16.2 kDa protein.